The primary structure comprises 212 residues: TATA-box-binding protein 2 (212 aa).

2 consecutive repeat copies span residues 30–114 (THPE…KKIG) and 120–201 (SNFN…YPIL).

The protein belongs to the TBP family. Belongs to the TFIID complex together with the TBP-associated factors (TAFs). Binds DNA as monomer.

Its subcellular location is the nucleus. General transcription factor that functions at the core of the DNA-binding multiprotein factor TFIID. Binding of TFIID to the TATA box is the initial transcriptional step of the pre-initiation complex (PIC), playing a role in the activation of eukaryotic genes transcribed by RNA polymerase II. The sequence is that of TATA-box-binding protein 2 from Entamoeba histolytica (strain ATCC 30459 / HM-1:IMSS / ABRM).